The primary structure comprises 196 residues: Alpha-crystallin A chain (196 aa).

An N-acetylmethionine modification is found at methionine 1. Residues methionine 1–glutamate 63 form a required for complex formation with BFSP1 and BFSP2 region. Glutamine 6 carries the deamidated glutamine; partial modification. Position 45 is a phosphoserine (serine 45). The residue at position 50 (glutamine 50) is a Deamidated glutamine; partial. The sHSP domain occupies histidine 76–serine 185. An N6-acetyllysine mark is found at lysine 93 and lysine 122. Residue histidine 123 participates in Zn(2+) binding. Deamidated asparagine; partial is present on asparagine 124. Residues glutamate 125 and histidine 130 each contribute to the Zn(2+) site. Serine 145 bears the Phosphoserine mark. Glutamine 170 carries the deamidated glutamine; partial modification. The segment at glutamine 170–phenylalanine 196 is disordered. Positions glycine 176–proline 190 are enriched in basic and acidic residues. Histidine 177 serves as a coordination point for Zn(2+). Serine 185 is a glycosylation site (O-linked (GlcNAc) serine).

The protein belongs to the small heat shock protein (HSP20) family. In terms of assembly, heteromer composed of three CRYAA and one CRYAB subunits. Inter-subunit bridging via zinc ions enhances stability, which is crucial as there is no protein turn over in the lens. Can also form homodimers and homotetramers (dimers of dimers) which serve as the building blocks of homooligomers. Within homooligomers, the zinc-binding motif is created from residues of 3 different molecules. His-123 and Glu-125 from one molecule are ligands of the zinc ion, and His-130 and His-177 residues from additional molecules complete the site with tetrahedral coordination geometry. Part of a complex required for lens intermediate filament formation composed of BFSP1, BFSP2 and CRYAA. Acetylation at Lys-93 may increase chaperone activity. Post-translationally, undergoes age-dependent proteolytical cleavage at the C-terminus.

It localises to the cytoplasm. Its subcellular location is the nucleus. Functionally, contributes to the transparency and refractive index of the lens. Acts as a chaperone, preventing aggregation of various proteins under a wide range of stress conditions. Required for the correct formation of lens intermediate filaments as part of a complex composed of BFSP1, BFSP2 and CRYAA. This is Alpha-crystallin A chain (CRYAA) from Spalax ehrenbergi (Middle East blind mole rat).